The chain runs to 173 residues: MNPRRKSRFKLVIFVVLGIAIASGLMLYALRQNIDLFYTPSEVIQGKDNNPNQKPEVGQRIRVGGMVVEGTVVRDPKSLKVRFDLNDIGPAITVEYEGILPDLFREGQGIVAQGVLTQPTVLTATEVLAKHDENYVPPELGEKMQKVHKPMGIEAADLKGESARDRQEKEGAK.

Residues M1 to R8 lie on the Cytoplasmic side of the membrane. The chain crosses the membrane as a helical; Signal-anchor for type II membrane protein span at residues F9 to A29. Over L30–K173 the chain is Periplasmic. Residues H131 and Y135 each coordinate heme. Positions G152–K173 are disordered. The span at A156–K173 shows a compositional bias: basic and acidic residues.

Belongs to the CcmE/CycJ family.

The protein localises to the cell inner membrane. Its function is as follows. Heme chaperone required for the biogenesis of c-type cytochromes. Transiently binds heme delivered by CcmC and transfers the heme to apo-cytochromes in a process facilitated by CcmF and CcmH. The sequence is that of Cytochrome c-type biogenesis protein CcmE from Haemophilus influenzae (strain ATCC 51907 / DSM 11121 / KW20 / Rd).